The chain runs to 461 residues: Cysteine--tRNA ligase (461 aa).

Zn(2+) is bound at residue Cys28. The short motif at 30–40 (ITVYDLCHIGH) is the 'HIGH' region element. Residues Cys209, His234, and Glu238 each coordinate Zn(2+). The short motif at 266–270 (KMSKS) is the 'KMSKS' region element. ATP is bound at residue Lys269.

It belongs to the class-I aminoacyl-tRNA synthetase family. In terms of assembly, monomer. The cofactor is Zn(2+).

Its subcellular location is the cytoplasm. The enzyme catalyses tRNA(Cys) + L-cysteine + ATP = L-cysteinyl-tRNA(Cys) + AMP + diphosphate. This is Cysteine--tRNA ligase from Pectobacterium carotovorum subsp. carotovorum (strain PC1).